A 360-amino-acid chain; its full sequence is Heat-inducible transcription repressor HrcA (360 aa).

The protein belongs to the HrcA family.

Functionally, negative regulator of class I heat shock genes (grpE-dnaK-dnaJ and groELS operons). Prevents heat-shock induction of these operons. This chain is Heat-inducible transcription repressor HrcA, found in Streptococcus thermophilus (strain CNRZ 1066).